Consider the following 791-residue polypeptide: Cullin-2 (791 aa).

A Cullin neddylation domain is found at Asp722–Asn784. Residue Lys736 forms a Glycyl lysine isopeptide (Lys-Gly) (interchain with G-Cter in NEDD8) linkage.

Belongs to the cullin family. In terms of assembly, component of multiple CBC (Cul2-ElonginB-ElonginC) E3 ubiquitin-protein ligase complexes formed of cul-2, elb-1, elc-1, rbx-1 and a variable substrate recognition component. Component of the CBC(fem-1) E3 ubiquitin-protein ligase complex with fem-1, fem-2 and fem-3. The CBC(fem-1) complex interacts with tra-1 and promotes tra-1 degradation. Probable component of the CBC(lrr-1) E3 ubiquitin-protein ligase complex incuding cul-2, elb-1, elc-1, rbx-1 and lrr-1. The CBC(lrr-1) complex interacts with the DNA replisome complex at the end of S phase; the interaction promotes the release of components of the CMG helicase complex (a component of the replisome) from chromatin. Probable component of an CBC(zif-1) E3 ubiquitin-protein ligase including cul-2, elc-1, rbx-1 and zif-1. Part of an E3 ubiquitin-protein ligase complex including cul-2, elc-1 and zyg-11. Interacts with Skp1-related protein skr-10. In terms of processing, neddylated; which enhances the ubiquitination activity of CBC (Cul2-ElonginB-ElonginC) E3 ubiquitin-protein ligase complexes. In adults, highly expressed in meiotic cells and oocytes. In larvae, expressed in many proliferating cell types: P cells during the L1 stage; seam cells when they divide at every molt; vulval and somatic gonad cells in late L3 and L4 stages; and intestinal cells throughout larval development.

It localises to the cytoplasm. It is found in the nucleus. It participates in protein modification; protein ubiquitination. Its function is as follows. Core component of multiple cullin-RING-based CBC (Cul2-ElonginB-ElonginC) E3 ubiquitin-protein ligase complexes which mediate the ubiquitination and subsequent proteasomal degradation of target proteins. As a scaffold protein may contribute to catalysis through positioning of the substrate and the ubiquitin-conjugating enzyme. The functional specificity of the CBC complex depends on the variable substrate recognition component. May function in ubiquitin-mediated degradation of CKIs to target cki-1 for degradation. CBC(zif-1) may ensure germline precursor cell asymmetry by targeting germline proteins for destruction if expressed in non-germline cells. As part of the CBC(fem-1) complex directs ubiquitination of tra-1. As part of the CBC(lrr-1) complex, required for the ubiquitination and dissasembly of the CMG helicase complex from chromatin at the end of DNA replication. Positive cell-cycle regulator that is required at two distinct points in the cell cycle; the G1-to-S-phase transition and mitosis. Also required for proper cytoskeletal movement and mitotic chromosome condensation. In Caenorhabditis elegans, this protein is Cullin-2.